The sequence spans 239 residues: tRNA1(Val) (adenine(37)-N6)-methyltransferase (239 aa).

The protein belongs to the methyltransferase superfamily. tRNA (adenine-N(6)-)-methyltransferase family.

It is found in the cytoplasm. The catalysed reaction is adenosine(37) in tRNA1(Val) + S-adenosyl-L-methionine = N(6)-methyladenosine(37) in tRNA1(Val) + S-adenosyl-L-homocysteine + H(+). Functionally, specifically methylates the adenine in position 37 of tRNA(1)(Val) (anticodon cmo5UAC). This chain is tRNA1(Val) (adenine(37)-N6)-methyltransferase, found in Vibrio vulnificus (strain CMCP6).